The chain runs to 264 residues: Teichoic acids export ATP-binding protein TagH (264 aa).

One can recognise an ABC transporter domain in the interval 24–243; it reads IKDALIPKNK…YEAFLKTFKK (220 aa). Residue 57–64 coordinates ATP; sequence GINGSGKS.

The protein belongs to the ABC transporter superfamily. Teichoic acids exporter (TC 3.A.1.104.1) family. In terms of assembly, the complex is composed of two ATP-binding proteins (TagH) and two transmembrane proteins (TagG).

It localises to the cell membrane. The enzyme catalyses ATP + H2O + teichoic acidSide 1 = ADP + phosphate + teichoic acidSide 2.. Part of the ABC transporter complex TagGH involved in teichoic acids export. Responsible for energy coupling to the transport system. This Staphylococcus epidermidis (strain ATCC 35984 / DSM 28319 / BCRC 17069 / CCUG 31568 / BM 3577 / RP62A) protein is Teichoic acids export ATP-binding protein TagH.